Here is a 210-residue protein sequence, read N- to C-terminus: Large ribosomal subunit protein uL3 (210 aa).

The disordered stretch occupies residues Gly-131–Arg-154.

The protein belongs to the universal ribosomal protein uL3 family. As to quaternary structure, part of the 50S ribosomal subunit. Forms a cluster with proteins L14 and L19.

Its function is as follows. One of the primary rRNA binding proteins, it binds directly near the 3'-end of the 23S rRNA, where it nucleates assembly of the 50S subunit. This chain is Large ribosomal subunit protein uL3, found in Thermoanaerobacter pseudethanolicus (strain ATCC 33223 / 39E) (Clostridium thermohydrosulfuricum).